We begin with the raw amino-acid sequence, 161 residues long: Anaerobic nitrite reductase HB2 (161 aa).

Positions 5–154 (VFTEKQEALV…LALAIKAEMK (150 aa)) constitute a Globin domain. The short motif at 38 to 42 (EIAPA) is the Homodimerization element. Heme b is bound by residues serine 48, lysine 62, histidine 66, and histidine 101. A Homodimerization motif is present at residues 108–120 (DPHFEVVKEALVR).

The protein belongs to the plant globin family. Homodimer. Heme b is required as a cofactor.

It localises to the cytoplasm. The protein resides in the nucleus. It carries out the reaction Fe(III)-heme b-[protein] + nitric oxide + H2O = Fe(II)-heme b-[protein] + nitrite + 2 H(+). In terms of biological role, phytoglobin that reduces nitrite to nitric oxide (NO) under anoxic conditions (e.g. during flooding or in waterlogged soil). May not function as an oxygen storage or transport protein. Has an unusually high affinity for O(2) through an hexacoordinate heme iron because of a very low dissociation constant. The sequence is that of Anaerobic nitrite reductase HB2 from Brassica napus (Rape).